A 282-amino-acid polypeptide reads, in one-letter code: ATP synthase gamma chain (282 aa).

Belongs to the ATPase gamma chain family. F-type ATPases have 2 components, CF(1) - the catalytic core - and CF(0) - the membrane proton channel. CF(1) has five subunits: alpha(3), beta(3), gamma(1), delta(1), epsilon(1). CF(0) has three main subunits: a, b and c.

It localises to the cell membrane. In terms of biological role, produces ATP from ADP in the presence of a proton gradient across the membrane. The gamma chain is believed to be important in regulating ATPase activity and the flow of protons through the CF(0) complex. The chain is ATP synthase gamma chain from Clostridium botulinum (strain Okra / Type B1).